The following is a 156-amino-acid chain: Small ribosomal subunit protein uS7 (156 aa).

It belongs to the universal ribosomal protein uS7 family. As to quaternary structure, part of the 30S ribosomal subunit. Contacts proteins S9 and S11.

Functionally, one of the primary rRNA binding proteins, it binds directly to 16S rRNA where it nucleates assembly of the head domain of the 30S subunit. Is located at the subunit interface close to the decoding center, probably blocks exit of the E-site tRNA. This Allorhizobium ampelinum (strain ATCC BAA-846 / DSM 112012 / S4) (Agrobacterium vitis (strain S4)) protein is Small ribosomal subunit protein uS7.